An 860-amino-acid chain; its full sequence is SH2 domain-containing protein 3C (860 aa).

Phosphoserine is present on S22. 2 disordered regions span residues 51–117 (EATQ…PPGL) and 130–180 (PLED…PEAG). Basic and acidic residues predominate over residues 162–175 (ERPPRDVHSERAAG). The SH2 domain maps to 220 to 319 (WYHGRIPREV…QSGAIIYCPV (100 aa)). 2 positions are modified to phosphotyrosine: Y278 and Y283. The disordered stretch occupies residues 335-537 (GQGSSKPASP…LSENGAPEGD (203 aa)). The residue at position 359 (S359) is a Phosphoserine. Low complexity-rich tracts occupy residues 405–420 (SPMS…PAYS), 427–443 (AAPA…SPVA), and 479–490 (SPSPSLSSYSDP). The residue at position 440 (S440) is a Phosphoserine. In terms of domain architecture, Ras-GEF spans 586–854 (DARTLARHVT…TALSHKLEPA (269 aa)). Y793 is modified (phosphotyrosine).

In terms of assembly, component of a complex comprised of SH2D3C, BCAR1/CAS, and CRK. Within the complex, interacts with CRK and (via C-terminus) with BCAR1/CAS (via C-terminus). Interacts with NEDD9/HEF1. Interacts with EPHB2. As to quaternary structure, interacts with NEDD9/HEF1. Interacts with BCAR1/CAS. Interacts with PTK2B. Interacts (via C-terminus) with BCAR1/CAS (via C-terminus). Interacts with IGF1. In terms of processing, phosphorylated by MAPK/ERK upon T-cell receptor stimulation in T-cells. In terms of tissue distribution, ubiquitously expressed.

Its subcellular location is the cytoplasm. It localises to the cell membrane. It is found in the cell projection. The protein resides in the axon. The protein localises to the ruffle membrane. Its function is as follows. Acts as an adapter protein that mediates cell signaling pathways involved in cellular functions such as cell adhesion and migration, tissue organization, and the regulation of the immune response. Plays a role in integrin-mediated cell adhesion through BCAR1-CRK-RAPGEF1 signaling and activation of the small GTPase RAP1. Promotes cell migration and invasion through the extracellular matrix. Required for marginal zone B-cell development and thymus-independent type 2 immune responses. Mediates migration and adhesion of B cells in the splenic marginal zone via promoting hyperphosphorylation of NEDD9/CASL. Plays a role in CXCL13-induced chemotaxis of B-cells. Plays a role in the migration of olfactory sensory neurons (OSNs) into the forebrain and the innervation of the olfactory bulb by the OSN axons during development. Required for the efficient tyrosine phosphorylation of BCAR1 in OSN axons. Functionally, important regulator of chemokine-induced, integrin-mediated T lymphocyte adhesion and migration, acting upstream of RAP1. Required for tissue-specific adhesion of T lymphocytes to peripheral tissues. Required for basal and CXCL2 stimulated serine-threonine phosphorylation of NEDD9. May be involved in the regulation of T-cell receptor-mediated IL2 production through the activation of the JNK pathway in T-cells. May be involved in the BCAR1/CAS-mediated JNK activation pathway. This Homo sapiens (Human) protein is SH2 domain-containing protein 3C (SH2D3C).